The sequence spans 615 residues: Prickle planar cell polarity protein 3 (615 aa).

The segment covering 1 to 12 (MFARGSRRRRSG) has biased composition (basic residues). A disordered region spans residues 1–26 (MFARGSRRRRSGRAPPEAEDPDRGQP). In terms of domain architecture, PET spans 74 to 182 (SDFQRHSISD…IVRIFPVTIT (109 aa)). 3 consecutive LIM zinc-binding domains span residues 184 to 249 (AICE…CLRP), 250 to 309 (RCQA…RHAE), and 310 to 373 (YCDG…SEPT). 2 disordered regions span residues 396-567 (ASFS…LGER) and 587-615 (TFNSPSLSLPRDSRAGMPRQARDKNCIVA). Positions 405 to 415 (SETTTKGTSTE) are enriched in polar residues. S475 and S491 each carry phosphoserine. Residues 508–531 (PSRRRHHHHNHHHHHNRHPSRRRH) are compositionally biased toward basic residues. Low complexity predominate over residues 537 to 555 (GSGSDSESCSSSPSSSSSE). Positions 606–615 (QARDKNCIVA) are enriched in basic and acidic residues.

Belongs to the prickle / espinas / testin family. As to quaternary structure, interacts with VANGL2 via its C-terminus. The VANGL2-dependent membrane recruitment of PRICKLE3 is a prerequisite for its polarization. Interacts with WTIP. WTIP is involved in the recruitment of PRICKLE3 to the basal body. Interacts with MT-ATP8, a component of the mitochondrial complex V. As to expression, widely expressed.

It is found in the cytoplasm. The protein localises to the cell membrane. It localises to the mitochondrion. Functionally, involved in the planar cell polarity (PCP) pathway that is essential for the polarization of epithelial cells during morphogenetic processes, including gastrulation and neurulation. PCP is maintained by two molecular modules, the global and the core modules, PRICKLE3 being part of the core module. Distinct complexes of the core module segregate to opposite sides of the cell, where they interact with the opposite complex in the neighboring cell at or near the adherents junctions. Involved in the organization of the basal body. Involved in cilia growth and positioning. Required for proper assembly, stability, and function of mitochondrial membrane ATP synthase (mitochondrial complex V). This chain is Prickle planar cell polarity protein 3, found in Homo sapiens (Human).